Reading from the N-terminus, the 148-residue chain is Hemoglobin subunit gamma (148 aa).

In terms of domain architecture, Globin spans 3–148 (HFTAEEKAII…VAIAMGHKYH (146 aa)). Heme b-binding residues include His-64 and His-93.

It belongs to the globin family. As to quaternary structure, heterotetramer of two alpha chains and two gamma chains in fetal hemoglobin (Hb F). Red blood cells.

Its function is as follows. Gamma chains make up the fetal hemoglobin F, in combination with alpha chains. This is Hemoglobin subunit gamma (HBG) from Carlito syrichta (Philippine tarsier).